Consider the following 501-residue polypeptide: Probable malate:quinone oxidoreductase (501 aa).

Belongs to the MQO family. Requires FAD as cofactor.

It carries out the reaction (S)-malate + a quinone = a quinol + oxaloacetate. It functions in the pathway carbohydrate metabolism; tricarboxylic acid cycle; oxaloacetate from (S)-malate (quinone route): step 1/1. The protein is Probable malate:quinone oxidoreductase of Paenarthrobacter aurescens (strain TC1).